The primary structure comprises 309 residues: Protoheme IX farnesyltransferase 2 (309 aa).

8 consecutive transmembrane segments (helical) span residues 35-55 (FKVV…APDV), 59-79 (MGVQ…AAVI), 107-127 (AHAL…LMLW), 131-151 (LTAI…TSFL), 159-179 (IVIG…SETG), 186-206 (WLLV…LAIA), 238-258 (LLAI…IYLI), and 289-309 (FSII…WLLL).

This sequence belongs to the UbiA prenyltransferase family. Protoheme IX farnesyltransferase subfamily.

The protein localises to the cell inner membrane. The catalysed reaction is heme b + (2E,6E)-farnesyl diphosphate + H2O = Fe(II)-heme o + diphosphate. Its pathway is porphyrin-containing compound metabolism; heme O biosynthesis; heme O from protoheme: step 1/1. Its function is as follows. Converts heme B (protoheme IX) to heme O by substitution of the vinyl group on carbon 2 of heme B porphyrin ring with a hydroxyethyl farnesyl side group. The sequence is that of Protoheme IX farnesyltransferase 2 from Pseudoalteromonas translucida (strain TAC 125).